We begin with the raw amino-acid sequence, 161 residues long: Nucleotide-binding protein Geob_0921 (161 aa).

Belongs to the YajQ family.

Its function is as follows. Nucleotide-binding protein. This Geotalea daltonii (strain DSM 22248 / JCM 15807 / FRC-32) (Geobacter daltonii) protein is Nucleotide-binding protein Geob_0921.